A 20-amino-acid chain; its full sequence is Acidic phospholipase A2 CbIbeta (20 aa).

Belongs to the phospholipase A2 family. Group II subfamily. D49 sub-subfamily. In terms of assembly, heterodimer of an acidic subunit (CbIalpha or CbIbeta) and a basic subunit (CbII). The acidic subunit (CbI) is non-toxic, and increases the toxicity of the basic subunit (CbII). The cofactor is Ca(2+). In terms of processing, contains 7 disulfide bonds. As to expression, expressed by the venom gland.

It is found in the secreted. It carries out the reaction a 1,2-diacyl-sn-glycero-3-phosphocholine + H2O = a 1-acyl-sn-glycero-3-phosphocholine + a fatty acid + H(+). Functionally, heterodimer: presynaptic neurotoxin. Monomer: Snake venom phospholipase A2 (PLA2) is inactive towards micellar phosphatidylcholine but is weakly active towards non-micellar dithiolecithin. PLA2 catalyzes the calcium-dependent hydrolysis of the 2-acyl groups in 3-sn-phosphoglycerides. This chain is Acidic phospholipase A2 CbIbeta, found in Pseudocerastes fieldi (Field's horned viper).